The following is a 127-amino-acid chain: Large ribosomal subunit protein uL22 (127 aa).

Belongs to the universal ribosomal protein uL22 family. As to quaternary structure, part of the 50S ribosomal subunit.

This protein binds specifically to 23S rRNA; its binding is stimulated by other ribosomal proteins, e.g. L4, L17, and L20. It is important during the early stages of 50S assembly. It makes multiple contacts with different domains of the 23S rRNA in the assembled 50S subunit and ribosome. Its function is as follows. The globular domain of the protein is located near the polypeptide exit tunnel on the outside of the subunit, while an extended beta-hairpin is found that lines the wall of the exit tunnel in the center of the 70S ribosome. The protein is Large ribosomal subunit protein uL22 of Methylorubrum extorquens (strain CM4 / NCIMB 13688) (Methylobacterium extorquens).